The primary structure comprises 249 residues: Molybdate/tungstate transport system permease protein WtpB (249 aa).

The Cytoplasmic segment spans residues 1–10 (MDRRDYLAYA). Residues 11–31 (FAGLGAFLVAFIGLPLFMIFI) traverse the membrane as a helical segment. The Extracellular portion of the chain corresponds to 32 to 56 (KQAYDLEALQRTLVDPLVIESIRNS). Residues 53 to 239 (IRNSLFTATV…TISLAVFIFL (187 aa)) form the ABC transmembrane type-1 domain. The chain crosses the membrane as a helical span at residues 57–77 (LFTATVSTLLGILFGVPLGYV). The Cytoplasmic portion of the chain corresponds to 78–96 (LARKEFKGKNFVQALIDTP). Residues 97–117 (IVIPHSVVGIMLLVTFSDAIL) form a helical membrane-spanning segment. Asp-118 is a topological domain (extracellular). The helical transmembrane segment at 119 to 139 (NYKGIVAVMLFVSSPFIVNSA) threads the bilayer. Over 140 to 179 (RDGFLSVDEKLEYVARTLGASGLRTFFSVTLPNAIHSIAS) the chain is Cytoplasmic. Residues 180 to 200 (GAIMAWARAISEVGAILIVAY) traverse the membrane as a helical segment. Topologically, residues 201–223 (YPKTAQVLIMEYFNNYGLRASRP) are extracellular. A helical membrane pass occupies residues 224–244 (IAVILVTISLAVFIFLRWLVG). At 245–249 (RGRNA) the chain is on the cytoplasmic side.

The protein belongs to the binding-protein-dependent transport system permease family. In terms of assembly, the complex is composed of two ATP-binding proteins (WtpC), two transmembrane proteins (WtpB) and a solute-binding protein (WtpA).

The protein resides in the cell membrane. Its function is as follows. Part of the ABC transporter complex WtpABC involved in molybdate/tungstate import. Probably responsible for the translocation of the substrate across the membrane. The protein is Molybdate/tungstate transport system permease protein WtpB of Pyrococcus furiosus (strain ATCC 43587 / DSM 3638 / JCM 8422 / Vc1).